The following is a 1466-amino-acid chain: Adhesion G protein-coupled receptor L1 (1466 aa).

Positions 1-28 (MARLAAALWSLCVTTVLVTSATQGLSRA) are cleaved as a signal peptide. Residues 29–852 (GLPFGLMRRE…EIYQGRINEL (824 aa)) are Extracellular-facing. The 90-residue stretch at 40-129 (ACEGYPIELR…KYLEVQYDCV (90 aa)) folds into the SUEL-type lectin domain. 5 disulfide bridges follow: Cys41-Cys71, Cys50-Cys128, Cys83-Cys115, Cys96-Cys102, and Cys135-Cys317. Glu42 serves as a coordination point for alpha-L-rhamnose. Residue Asn98 is glycosylated (N-linked (GlcNAc...) asparagine). Residue 117–120 (GTYK) participates in alpha-L-rhamnose binding. The Olfactomedin-like domain occupies 134-393 (VCPGTLQKVL…VVRYSLEFGP (260 aa)). Positions 395-463 (DPSAGPATSP…APAPSTRRPP (69 aa)) are disordered. A compositionally biased stretch (low complexity) spans 400-436 (PATSPPLSTTTTARPTPLTSTASPAATTPLRRAPLTT). Pro residues predominate over residues 448–463 (DLPPATAPAPSTRRPP). 2 disulfides stabilise this stretch: Cys475–Cys510 and Cys498–Cys527. Residues Asn526, Asn635, Asn736, Asn795, Asn800, and Asn821 are each glycosylated (N-linked (GlcNAc...) asparagine). In terms of domain architecture, GAIN-B spans 664-845 (PARFLAAKQN…AVLMAHREIY (182 aa)). Intrachain disulfides connect Cys796/Cys827 and Cys815/Cys829. The tract at residues 796 to 845 (CSFWNYSERSMLGYWSTQGCRLVESNKTHTTCACSHLTNFAVLMAHREIY) is GPS. A helical transmembrane segment spans residues 853-873 (LLSVITWVGIVISLVCLAICI). Residues 874–887 (STFCFLRGLQTDRN) lie on the Cytoplasmic side of the membrane. A helical membrane pass occupies residues 888-908 (TIHKNLCINLFLAELLFLVGI). Topologically, residues 909–914 (DKTQYE) are extracellular. Residues 915–935 (VACPIFAGLLHYFFLAAFSWL) traverse the membrane as a helical segment. The Cytoplasmic segment spans residues 936-958 (CLEGVHLYLLLVEVFESEYSRTK). Residues 959–979 (YYYLGGYCFPALVVGIAAAID) form a helical membrane-spanning segment. The Extracellular portion of the chain corresponds to 980–996 (YRSYGTEKACWLRVDNY). A helical membrane pass occupies residues 997–1017 (FIWSFIGPVSFVIVVNLVFLM). Residues 1018–1044 (VTLHKMIRSSSVLKPDSSRLDNIKSWA) lie on the Cytoplasmic side of the membrane. Residues 1045–1065 (LGAIALLFLLGLTWAFGLLFI) traverse the membrane as a helical segment. Over 1066 to 1069 (NKES) the chain is Extracellular. Residues 1070–1090 (VVMAYLFTTFNAFQGVFIFVF) form a helical membrane-spanning segment. The Cytoplasmic portion of the chain corresponds to 1091-1466 (HCALQKKVHK…DGQMQLVTSL (376 aa)). Arg1188 bears the Omega-N-methylarginine mark. Ser1214 bears the Phosphoserine mark. Disordered stretches follow at residues 1242-1267 (FNNSYSLRSGDFPPGDGGPEPPRGRN), 1288-1319 (RGASGGAKGPPPEPPVPPVPGVSEDEAGGPGS), 1352-1421 (ESES…SRPP), and 1443-1466 (YLAAPSLEGPGPDGDGQMQLVTSL). The segment covering 1296–1307 (GPPPEPPVPPVP) has biased composition (pro residues). At Ser1319 the chain carries Phosphoserine. The segment covering 1400 to 1412 (ALPPPPPAPPGPP) has biased composition (pro residues). A phosphoserine mark is found at Ser1448 and Ser1465.

It belongs to the G-protein coupled receptor 2 family. Adhesion G-protein coupled receptor (ADGR) subfamily. As to quaternary structure, forms a heterodimer, consisting of a large extracellular region (p120) non-covalently linked to a seven-transmembrane moiety (p85). Interacts with syntaxin and with proteins of the SHANK family via the PDZ domain. Interacts (via extracellular domain) with FLRT1, FLRT2 and FLRT3 (via extracellular domain). Post-translationally, autoproteolytically cleaved into 2 subunits, an extracellular subunit and a seven-transmembrane subunit. This proteolytic processing takes place early in the biosynthetic pathway, either in the endoplasmic reticulum or in the early compartment of the Golgi apparatus.

Its subcellular location is the cell membrane. The protein localises to the cell projection. It is found in the axon. The protein resides in the growth cone. It localises to the synapse. Its subcellular location is the presynaptic cell membrane. The protein localises to the synaptosome. In terms of biological role, calcium-independent receptor of high affinity for alpha-latrotoxin, an excitatory neurotoxin present in black widow spider venom which triggers massive exocytosis from neurons and neuroendocrine cells. Receptor for TENM2 that mediates heterophilic synaptic cell-cell contact and postsynaptic specialization. Receptor probably implicated in the regulation of exocytosis. The chain is Adhesion G protein-coupled receptor L1 from Mus musculus (Mouse).